The sequence spans 434 residues: D-inositol 3-phosphate glycosyltransferase (434 aa).

1D-myo-inositol 3-phosphate is bound at residue histidine 19. UDP-N-acetyl-alpha-D-glucosamine-binding positions include 25-26 and glycine 33; that span reads QP. 1D-myo-inositol 3-phosphate is bound by residues 30 to 35, lysine 88, tyrosine 121, threonine 145, and arginine 165; that span reads DAGGMN. UDP-N-acetyl-alpha-D-glucosamine contacts are provided by arginine 239, lysine 244, and glutamine 297. Mg(2+) contacts are provided by tyrosine 306, arginine 307, and alanine 309. Residues glutamate 319 and glutamate 327 each coordinate UDP-N-acetyl-alpha-D-glucosamine. Residue threonine 333 coordinates Mg(2+). Residues 414–434 are disordered; that stretch reads HPRPAARRSGRRFSMRRGVRT.

The protein belongs to the glycosyltransferase group 1 family. MshA subfamily. Homodimer.

The catalysed reaction is 1D-myo-inositol 3-phosphate + UDP-N-acetyl-alpha-D-glucosamine = 1D-myo-inositol 2-acetamido-2-deoxy-alpha-D-glucopyranoside 3-phosphate + UDP + H(+). Its function is as follows. Catalyzes the transfer of a N-acetyl-glucosamine moiety to 1D-myo-inositol 3-phosphate to produce 1D-myo-inositol 2-acetamido-2-deoxy-glucopyranoside 3-phosphate in the mycothiol biosynthesis pathway. The polypeptide is D-inositol 3-phosphate glycosyltransferase (mshA) (Mycolicibacterium smegmatis (strain ATCC 700084 / mc(2)155) (Mycobacterium smegmatis)).